The sequence spans 245 residues: Chlorophyll a-b binding protein 1B-21, chloroplastic (245 aa).

The N-terminal 44 residues, 1-44 (MASSSGLRSCSAVGVPSLLAPSSRSGRSGLPFCAYATTSGRVTM), are a transit peptide targeting the chloroplast. Tryptophan 48 provides a ligand contact to chlorophyll b. 3 residues coordinate chlorophyll a: phenylalanine 68, glutamate 87, and histidine 90. Arginine 92 provides a ligand contact to chlorophyll b. A helical transmembrane segment spans residues 93–113 (WAMLCVPGVLVPEALGLGNWV). Leucine 129 is a chlorophyll a binding site. Residues 132–152 (PVPWGNLPTILAIEFLAIAFA) form a helical membrane-spanning segment. Residues valine 133, glutamate 153, and arginine 156 each coordinate chlorophyll b. Chlorophyll a-binding residues include lysine 190, glutamate 191, asparagine 194, arginine 196, glutamine 208, and histidine 224.

It belongs to the light-harvesting chlorophyll a/b-binding (LHC) protein family. The LHC complex consists of chlorophyll a-b binding proteins. It depends on Binds at least 14 chlorophylls (8 Chl-a and 6 Chl-b) and carotenoids such as lutein and neoxanthin. as a cofactor. Post-translationally, photoregulated by reversible phosphorylation of its threonine residues.

It localises to the plastid. It is found in the chloroplast thylakoid membrane. Its function is as follows. The light-harvesting complex (LHC) functions as a light receptor, it captures and delivers excitation energy to photosystems with which it is closely associated. This is Chlorophyll a-b binding protein 1B-21, chloroplastic (LHC Ib-21) from Hordeum vulgare (Barley).